Here is a 233-residue protein sequence, read N- to C-terminus: Antiholin-like protein LrgB (233 aa).

6 consecutive transmembrane segments (helical) span residues 5–25, 33–53, 63–83, 97–117, 152–172, and 212–232; these read LGINTPYFGILVSLIPFVIAT, GFFLLAPLFVSMVAGIAFLKL, IGGDIINFFLEPATICFAIPL, IFGGIAVGTIIALLLIYLVAI, LTSLAVILNAVVISALGAKIV, and IAVVIVGVIVVAVVPILAPIL.

This sequence belongs to the CidB/LrgB family. LrgB subfamily.

The protein resides in the cell membrane. Inhibits the expression or activity of extracellular murein hydrolases by interacting, possibly with LrgA, with the holin-like proteins CidA and/or CidB. The LrgAB and CidAB proteins may affect the proton motive force of the membrane. May be involved in programmed cell death (PCD), possibly triggering PCD in response to antibiotics and environmental stresses. The sequence is that of Antiholin-like protein LrgB from Staphylococcus epidermidis (strain ATCC 35984 / DSM 28319 / BCRC 17069 / CCUG 31568 / BM 3577 / RP62A).